The sequence spans 2017 residues: Rootletin (2017 aa).

Coiled coils occupy residues 70 to 262 (ATEM…KVTN) and 318 to 444 (ERDL…LETE). The span at 464-483 (SESGVQLSGSERTADASNGS) shows a compositional bias: polar residues. The tract at residues 464-518 (SESGVQLSGSERTADASNGSLRGLSGQRTPSPPRRSSPGRGRSPRRGPSPACSDS) is disordered. Positions 499-513 (SSPGRGRSPRRGPSP) are enriched in low complexity. 2 coiled-coil regions span residues 546–1058 (QDLL…LAES) and 1091–1438 (EMER…GLRS). Disordered stretches follow at residues 1184 to 1226 (LRES…RSAV) and 1443 to 1575 (GLGL…GRLS). Phosphoserine is present on residues Ser1460, Ser1470, Ser1476, Ser1483, Ser1486, Ser1490, and Ser1496. Residues 1505-1704 (EAVRGALREF…DSEVKAGTLQ (200 aa)) adopt a coiled-coil conformation. A compositionally biased stretch (basic and acidic residues) spans 1510–1529 (ALREFLQELRSAQRERDELR). Ser1575 and Ser1660 each carry phosphoserine. The disordered stretch occupies residues 1962-2017 (RSAQAQTERTLEARERAHRQRVRGLEEQVSTLKGQLQQELRRSSAPFSPPSGPPEK). The span at 1989–1999 (QVSTLKGQLQQ) shows a compositional bias: polar residues. Residues 2008-2017 (FSPPSGPPEK) are compositionally biased toward pro residues.

Belongs to the rootletin family. As to quaternary structure, homomer. Interacts with KLC3, NEK2 and the N-terminus of CEP250. Interacts with CEP44. Interacts with CCDC102B (via N-terminus). Phosphorylated by NEK2 which may regulate its association with centrosomes.

The protein resides in the cytoplasm. It localises to the cytoskeleton. It is found in the microtubule organizing center. The protein localises to the centrosome. Its subcellular location is the centriole. The protein resides in the cilium basal body. In terms of biological role, major structural component of the ciliary rootlet, a cytoskeletal-like structure in ciliated cells which originates from the basal body at the proximal end of a cilium and extends proximally toward the cell nucleus. Furthermore, is required for the correct positioning of the cilium basal body relative to the cell nucleus, to allow for ciliogenesis. Contributes to centrosome cohesion before mitosis. This chain is Rootletin, found in Homo sapiens (Human).